We begin with the raw amino-acid sequence, 331 residues long: 5'-AMP-activated protein kinase subunit gamma-1 (331 aa).

Over residues 1 to 12 the composition is skewed to polar residues; the sequence is METVISSDSSPA. The disordered stretch occupies residues 1 to 26; the sequence is METVISSDSSPAVENEHPQETPESNN. CBS domains are found at residues 43 to 103, 125 to 187, and 198 to 260; these read PTSS…KSAL, SFKP…PKPE, and IGTY…NLDV. Residues R70, 85–90, V130, 151–152, and K170 each bind ADP; these read MLTITD and HR. Residues R70, 85-90, V130, H151, 151-152, K170, T200, A205, 226-227, and 242-245 contribute to the AMP site; these read MLTITD, HR, SA, and SKFD. ATP contacts are provided by residues R70, 85–90, V130, 151–152, R152, and K170; these read MLTITD and HR. The AMPK pseudosubstrate signature appears at 138 to 159; it reads LFDAVSSLIRNKIHRLPVIDPE. 242 to 245 is a binding site for ADP; sequence SKFD. An ATP-binding site is contributed by 242 to 245; that stretch reads SKFD. Position 261 is a phosphoserine; by ULK1 (S261). Position 263 is a phosphothreonine; by ULK1 (T263). R269 contacts ADP. An AMP-binding site is contributed by R269. R269 provides a ligand contact to ATP. S270 is modified (phosphoserine; by ULK1). The region spanning 272–329 is the CBS 4 domain; sequence YFEGVLKCYLHETLETIINRLVEAEVHRLVVVDENDVVKGIVSLSDILQALVLTGGEK. ADP is bound by residues L277 and 298–299; that span reads HR. AMP is bound by residues L277, H298, 298 to 299, and 314 to 317; these read HR and SLSD. Residues L277 and 298-299 contribute to the ATP site; that span reads HR.

Belongs to the 5'-AMP-activated protein kinase gamma subunit family. In terms of assembly, AMPK is a heterotrimer of an alpha catalytic subunit (PRKAA1 or PRKAA2), a beta (PRKAB1 or PRKAB2) and a gamma non-catalytic subunits (PRKAG1, PRKAG2 or PRKAG3). Interacts with FNIP1 and FNIP2. In terms of processing, phosphorylated by ULK1 and ULK2; leading to negatively regulate AMPK activity and suggesting the existence of a regulatory feedback loop between ULK1, ULK2 and AMPK. Post-translationally, glycosylated; O-GlcNAcylated by OGT, promoting the AMP-activated protein kinase (AMPK) activity.

Its function is as follows. AMP/ATP-binding subunit of AMP-activated protein kinase (AMPK), an energy sensor protein kinase that plays a key role in regulating cellular energy metabolism. In response to reduction of intracellular ATP levels, AMPK activates energy-producing pathways and inhibits energy-consuming processes: inhibits protein, carbohydrate and lipid biosynthesis, as well as cell growth and proliferation. AMPK acts via direct phosphorylation of metabolic enzymes, and by longer-term effects via phosphorylation of transcription regulators. Also acts as a regulator of cellular polarity by remodeling the actin cytoskeleton; probably by indirectly activating myosin. Gamma non-catalytic subunit mediates binding to AMP, ADP and ATP, leading to activate or inhibit AMPK: AMP-binding results in allosteric activation of alpha catalytic subunit (PRKAA1 or PRKAA2) both by inducing phosphorylation and preventing dephosphorylation of catalytic subunits. ADP also stimulates phosphorylation, without stimulating already phosphorylated catalytic subunit. ATP promotes dephosphorylation of catalytic subunit, rendering the AMPK enzyme inactive. The polypeptide is 5'-AMP-activated protein kinase subunit gamma-1 (PRKAG1) (Homo sapiens (Human)).